Here is a 104-residue protein sequence, read N- to C-terminus: UPF0473 protein LJ_0477 (104 aa).

The protein belongs to the UPF0473 family.

This chain is UPF0473 protein LJ_0477, found in Lactobacillus johnsonii (strain CNCM I-12250 / La1 / NCC 533).